Here is a 703-residue protein sequence, read N- to C-terminus: UvrABC system protein B (703 aa).

The region spanning 33 to 419 is the Helicase ATP-binding domain; it reads ERIENGENDV…SDGVVEQIIR (387 aa). Position 46–53 (46–53) interacts with ATP; sequence GATGTGKT. The Beta-hairpin motif lies at 99-122; sequence YYDYYQPEAYIPQTDTYIEKDSNI. The Helicase C-terminal domain occupies 436–589; sequence QIDDLLAEIK…QIAYNQEHGI (154 aa). In terms of domain architecture, UVR spans 659 to 694; the sequence is ADLIRQLSEQMHTAAEQLQFELAARLRDEIRDLKKE.

This sequence belongs to the UvrB family. In terms of assembly, forms a heterotetramer with UvrA during the search for lesions. Interacts with UvrC in an incision complex.

The protein localises to the cytoplasm. Functionally, the UvrABC repair system catalyzes the recognition and processing of DNA lesions. A damage recognition complex composed of 2 UvrA and 2 UvrB subunits scans DNA for abnormalities. Upon binding of the UvrA(2)B(2) complex to a putative damaged site, the DNA wraps around one UvrB monomer. DNA wrap is dependent on ATP binding by UvrB and probably causes local melting of the DNA helix, facilitating insertion of UvrB beta-hairpin between the DNA strands. Then UvrB probes one DNA strand for the presence of a lesion. If a lesion is found the UvrA subunits dissociate and the UvrB-DNA preincision complex is formed. This complex is subsequently bound by UvrC and the second UvrB is released. If no lesion is found, the DNA wraps around the other UvrB subunit that will check the other stand for damage. The sequence is that of UvrABC system protein B from Bifidobacterium longum (strain NCC 2705).